Reading from the N-terminus, the 297-residue chain is Acetyl-coenzyme A carboxylase carboxyl transferase subunit beta (297 aa).

Residues Leu-27–Lys-296 form the CoA carboxyltransferase N-terminal domain. Residues Cys-31, Cys-34, Cys-50, and Cys-53 each coordinate Zn(2+). A C4-type zinc finger spans residues Cys-31–Cys-53.

Belongs to the AccD/PCCB family. As to quaternary structure, acetyl-CoA carboxylase is a heterohexamer composed of biotin carboxyl carrier protein (AccB), biotin carboxylase (AccC) and two subunits each of ACCase subunit alpha (AccA) and ACCase subunit beta (AccD). It depends on Zn(2+) as a cofactor.

Its subcellular location is the cytoplasm. It catalyses the reaction N(6)-carboxybiotinyl-L-lysyl-[protein] + acetyl-CoA = N(6)-biotinyl-L-lysyl-[protein] + malonyl-CoA. It participates in lipid metabolism; malonyl-CoA biosynthesis; malonyl-CoA from acetyl-CoA: step 1/1. Its function is as follows. Component of the acetyl coenzyme A carboxylase (ACC) complex. Biotin carboxylase (BC) catalyzes the carboxylation of biotin on its carrier protein (BCCP) and then the CO(2) group is transferred by the transcarboxylase to acetyl-CoA to form malonyl-CoA. This chain is Acetyl-coenzyme A carboxylase carboxyl transferase subunit beta, found in Stutzerimonas stutzeri (strain A1501) (Pseudomonas stutzeri).